The chain runs to 524 residues: MVLQKLPLIGLLLLLTIVASPANADGPVCPPSNKLSRASFPEGFLFGTATAAYQVEGAINETCRGPALWDIYCRRYPERCNNDNGDVAVDFFHRYKEDIQLMKNLNTDAFRMSIAWPRIFPHGRKEKGVSQAGVQFYHDLIDELIKNGITPFVTVFHWDTPQDLEDEYGGFLSERIVKDFREYADFVFQEYGGKVKHWITFNEPWVFSHAGYDVGKKAPGRCSSYVNAKCQDGRSGYEAYLVTHNLLISHAEAVEAYRKCEKCKGGKIGIAHSPAWFEAHDLADSQDGASIDRALDFILGWHLDTTTFGDYPQIMKDIVGHRLPKFTTEQKAKLKASTDFVGLNYYTSVFSNHLEKPDPSKPRWMQDSLITWESKNAQNYAIGSKPLTAALNVYSRGFRSLLKYIKDKYANPEIMIMENGYGEELGASDSVAVGTADHNRKYYLQRHLLSMQEAVCIDKVNVTGYFVWSLLDNFEWQDGYKNRFGLYYVDFKNNLTRYEKESGKYYKDFLSQGVRPSALKKDEL.

The first 24 residues, 1–24 (MVLQKLPLIGLLLLLTIVASPANA), serve as a signal peptide directing secretion. Gln-54 contacts a beta-D-glucoside. Asn-60 carries N-linked (GlcNAc...) asparagine glycosylation. A beta-D-glucoside-binding positions include His-157 and 202-203 (NE). Catalysis depends on Glu-203, which acts as the Proton donor. Cysteines 222 and 230 form a disulfide. 2 residues coordinate a beta-D-glucoside: Tyr-346 and Glu-418. Residue Glu-418 is the Nucleophile of the active site. N-linked (GlcNAc...) asparagine glycosylation occurs at Asn-461. A beta-D-glucoside is bound by residues Trp-468, 475–476 (EW), and Phe-484. Asn-494 is a glycosylation site (N-linked (GlcNAc...) asparagine). The Prevents secretion from ER motif lies at 521–524 (KDEL).

The protein belongs to the glycosyl hydrolase 1 family. In terms of assembly, homodimers. Binds to the deubiquitinating enzyme AMSH3. The inactive form interacts with PBP1/JAL30 to form the PYK10 complex, at least composed of PYK10/BGLU23, BGLU21, BGLU22, JAL22, JAL23, PBP1/JAL30, PBP2/JAL31, JAL32, JAL33, JAL34, JAL35, GLL22 and GLL23. In terms of processing, forms interchain disulfide bonds. As to expression, expressed exclusively in roots.

The protein resides in the endoplasmic reticulum lumen. The catalysed reaction is Hydrolysis of terminal, non-reducing beta-D-glucosyl residues with release of beta-D-glucose.. Activated by tissue damage and upon binding to PBP1 or PBP2. In terms of biological role, beta-D-glucosidase active on scopolin &gt; esculin &gt;&gt; 4-MU-glucoside &gt;&gt; DIMBOA-glucoside. No activity with pNP-glucoside, oNP-glucoside and sinigrin as substrates. May possess beta-D-fucosidase activity. Required for the beneficial interaction with the endophytic fungus P.indica. May participate in the control of root colonization by P.indica by repressing defense responses and modulating other responses required for a mutualistic interaction. The polypeptide is Beta-glucosidase 23 (Arabidopsis thaliana (Mouse-ear cress)).